Reading from the N-terminus, the 124-residue chain is Large ribosomal subunit protein uL29 (124 aa).

The protein belongs to the universal ribosomal protein uL29 family.

The protein is Large ribosomal subunit protein uL29 (RPL35) of Tetrahymena thermophila (strain SB210).